Reading from the N-terminus, the 218-residue chain is Thiopurine S-methyltransferase (218 aa).

Residues Trp10, Leu45, Glu66, and Arg123 each contribute to the S-adenosyl-L-methionine site.

The protein belongs to the class I-like SAM-binding methyltransferase superfamily. TPMT family.

It localises to the cytoplasm. The catalysed reaction is S-adenosyl-L-methionine + a thiopurine = S-adenosyl-L-homocysteine + a thiopurine S-methylether.. In Azotobacter vinelandii (strain DJ / ATCC BAA-1303), this protein is Thiopurine S-methyltransferase.